Here is a 362-residue protein sequence, read N- to C-terminus: Phosphoserine aminotransferase (362 aa).

Arg43 is an L-glutamate binding site. Pyridoxal 5'-phosphate contacts are provided by residues 77-78, Trp103, Thr153, Asp173, and Gln196; that span reads AR. N6-(pyridoxal phosphate)lysine is present on Lys197.

The protein belongs to the class-V pyridoxal-phosphate-dependent aminotransferase family. SerC subfamily. As to quaternary structure, homodimer. Pyridoxal 5'-phosphate serves as cofactor.

The protein resides in the cytoplasm. The catalysed reaction is O-phospho-L-serine + 2-oxoglutarate = 3-phosphooxypyruvate + L-glutamate. It catalyses the reaction 4-(phosphooxy)-L-threonine + 2-oxoglutarate = (R)-3-hydroxy-2-oxo-4-phosphooxybutanoate + L-glutamate. It functions in the pathway amino-acid biosynthesis; L-serine biosynthesis; L-serine from 3-phospho-D-glycerate: step 2/3. It participates in cofactor biosynthesis; pyridoxine 5'-phosphate biosynthesis; pyridoxine 5'-phosphate from D-erythrose 4-phosphate: step 3/5. Its function is as follows. Catalyzes the reversible conversion of 3-phosphohydroxypyruvate to phosphoserine and of 3-hydroxy-2-oxo-4-phosphonooxybutanoate to phosphohydroxythreonine. The polypeptide is Phosphoserine aminotransferase (Legionella pneumophila (strain Paris)).